The primary structure comprises 517 residues: Splicing factor U2AF 59 kDa subunit (517 aa).

The segment covering 1 to 13 (MDLSSRLSSGSSR) has biased composition (low complexity). The interval 1–112 (MDLSSRLSSG…PSRERSVRSI (112 aa)) is disordered. A compositionally biased stretch (basic and acidic residues) spans 20 to 89 (DYRDEEPRRE…RRYDDYEPRS (70 aa)). 2 RRM domains span residues 310 to 388 (DKIY…FACV) and 418 to 509 (RVLQ…FYGE).

It belongs to the splicing factor SR family. In terms of assembly, forms a heterodimer with the U2AF small subunit. Can also form a homodimer. U2AF large subunit (U2AF59), U2AF small subunit (U2AF23) and SF1 (bpb1) interact to form a complex required for complex A formation. Interacts with wat1/pop3.

The protein resides in the nucleus. Necessary for the splicing of pre-mRNA. The SF1-U2AF59-U2AF23 complex has a role in the recognition of the branch site (5'-UACUAAC-3'), the pyrimidine tract and the 3'-splice site at the 3'-end of introns. This chain is Splicing factor U2AF 59 kDa subunit (prp2), found in Schizosaccharomyces pombe (strain 972 / ATCC 24843) (Fission yeast).